The following is a 321-amino-acid chain: Probable endolytic peptidoglycan transglycosylase RlpA (321 aa).

It belongs to the RlpA family.

Its function is as follows. Lytic transglycosylase with a strong preference for naked glycan strands that lack stem peptides. The chain is Probable endolytic peptidoglycan transglycosylase RlpA from Synechocystis sp. (strain ATCC 27184 / PCC 6803 / Kazusa).